Here is a 420-residue protein sequence, read N- to C-terminus: Cytochrome c biogenesis protein Ccs1 (420 aa).

Helical transmembrane passes span 12 to 32, 71 to 91, and 157 to 177; these read LRFSIFLLLLISFCSIVGTVI, TWWFFALIFLFGLSLILCTFL, and IAPILVHLSMILILVGTIVGS.

It belongs to the Ccs1/CcsB family. In terms of assembly, may interact with CcsA.

Its subcellular location is the plastid. It localises to the chloroplast thylakoid membrane. In terms of biological role, required during biogenesis of c-type cytochromes (cytochrome c6 and cytochrome f) at the step of heme attachment. The chain is Cytochrome c biogenesis protein Ccs1 from Phaeodactylum tricornutum (strain CCAP 1055/1).